The following is a 133-amino-acid chain: Ribosome-binding factor A (133 aa).

The protein belongs to the RbfA family. In terms of assembly, monomer. Binds 30S ribosomal subunits, but not 50S ribosomal subunits or 70S ribosomes.

Its subcellular location is the cytoplasm. Functionally, one of several proteins that assist in the late maturation steps of the functional core of the 30S ribosomal subunit. Associates with free 30S ribosomal subunits (but not with 30S subunits that are part of 70S ribosomes or polysomes). Required for efficient processing of 16S rRNA. May interact with the 5'-terminal helix region of 16S rRNA. This is Ribosome-binding factor A from Klebsiella pneumoniae (strain 342).